The primary structure comprises 1376 residues: Protein FAM135B (1376 aa).

Acidic residues predominate over residues 431–442 (NEDECEFSEESP). The disordered stretch occupies residues 431–489 (NEDECEFSEESPSENTHVGSKPHSIQSTTVHENASFEKPNVGTKAQEDCSTEGPEQGFD). Over residues 443–462 (SENTHVGSKPHSIQSTTVHE) the composition is skewed to polar residues.

Belongs to the FAM135 family.

The sequence is that of Protein FAM135B (fam135b) from Xenopus laevis (African clawed frog).